Consider the following 138-residue polypeptide: Basic phospholipase A2 DAV-N6 (138 aa).

An N-terminal signal peptide occupies residues 1–16; it reads MRTLWIVAVLLVSVEG. Cystine bridges form between C42-C131, C44-C60, C59-C111, C65-C138, C66-C104, C73-C97, and C91-C102. Y43, G45, and G47 together coordinate Ca(2+). The active site involves H63. Residue D64 coordinates Ca(2+). D105 is a catalytic residue.

It depends on Ca(2+) as a cofactor. Expressed by the venom gland.

The protein localises to the secreted. The catalysed reaction is a 1,2-diacyl-sn-glycero-3-phosphocholine + H2O = a 1-acyl-sn-glycero-3-phosphocholine + a fatty acid + H(+). In terms of biological role, snake venom phospholipase A2 (PLA2) that inhibits neuromuscular transmission by blocking acetylcholine release from the nerve termini. PLA2 catalyzes the calcium-dependent hydrolysis of the 2-acyl groups in 3-sn-phosphoglycerides. This is Basic phospholipase A2 DAV-N6 from Deinagkistrodon acutus (Hundred-pace snake).